Here is a 729-residue protein sequence, read N- to C-terminus: Probable tape measure protein (729 aa).

Positions 9–35 form a coiled coil; the sequence is IMGDADQLSETLDQASEEVSAFGEQAK.

It belongs to the P2likevirus tape measure protein family.

Functionally, serves as a base for tail tube protein polymerization and acts as a template for tail length determination. This chain is Probable tape measure protein, found in Streptomyces phage phiC31 (Bacteriophage phi-C31).